The following is a 213-amino-acid chain: NADH-quinone oxidoreductase subunit I (213 aa).

2 consecutive 4Fe-4S ferredoxin-type domains span residues 74–103 (RFIE…METS) and 113–142 (GNYS…HGIE). Residues cysteine 83, cysteine 86, cysteine 89, cysteine 93, cysteine 122, cysteine 125, cysteine 128, and cysteine 132 each contribute to the [4Fe-4S] cluster site.

Belongs to the complex I 23 kDa subunit family. In terms of assembly, NDH-1 is composed of 14 different subunits. Subunits NuoA, H, J, K, L, M, N constitute the membrane sector of the complex. Requires [4Fe-4S] cluster as cofactor.

It localises to the cell inner membrane. The catalysed reaction is a quinone + NADH + 5 H(+)(in) = a quinol + NAD(+) + 4 H(+)(out). Functionally, NDH-1 shuttles electrons from NADH, via FMN and iron-sulfur (Fe-S) centers, to quinones in the respiratory chain. The immediate electron acceptor for the enzyme in this species is believed to be ubiquinone. Couples the redox reaction to proton translocation (for every two electrons transferred, four hydrogen ions are translocated across the cytoplasmic membrane), and thus conserves the redox energy in a proton gradient. This chain is NADH-quinone oxidoreductase subunit I, found in Campylobacter jejuni subsp. doylei (strain ATCC BAA-1458 / RM4099 / 269.97).